The following is a 133-amino-acid chain: U-scoloptoxin(05)-Sa1a (133 aa).

An N-terminal signal peptide occupies residues 1–24; the sequence is MPSLCIIALFGTLTFYTLIPSIHT.

This sequence belongs to the scoloptoxin-05 family. Contains 5 disulfide bonds. Expressed by the venom gland.

It localises to the secreted. This Scolopendra alternans (Florida Keys giant centipede) protein is U-scoloptoxin(05)-Sa1a.